The chain runs to 517 residues: 2-isopropylmalate synthase (517 aa).

In terms of domain architecture, Pyruvate carboxyltransferase spans 4 to 266 (INFFDTTLRD…ESTIQLNEIK (263 aa)). Residues Asp13, His201, His203, and Asn237 each coordinate Mn(2+). The regulatory domain stretch occupies residues 391 to 517 (EFESLQVHYG…IEIEKHHAIS (127 aa)).

It belongs to the alpha-IPM synthase/homocitrate synthase family. LeuA type 1 subfamily. In terms of assembly, homodimer. Requires Mn(2+) as cofactor.

It is found in the cytoplasm. It carries out the reaction 3-methyl-2-oxobutanoate + acetyl-CoA + H2O = (2S)-2-isopropylmalate + CoA + H(+). It participates in amino-acid biosynthesis; L-leucine biosynthesis; L-leucine from 3-methyl-2-oxobutanoate: step 1/4. Its function is as follows. Catalyzes the condensation of the acetyl group of acetyl-CoA with 3-methyl-2-oxobutanoate (2-ketoisovalerate) to form 3-carboxy-3-hydroxy-4-methylpentanoate (2-isopropylmalate). This Bacillus pumilus (strain SAFR-032) protein is 2-isopropylmalate synthase.